The following is a 407-amino-acid chain: Argininosuccinate synthase (407 aa).

Position 10-18 (10-18 (AYSGGLDTS)) interacts with ATP. L-citrulline-binding residues include Tyr-88 and Ser-93. Gly-118 contributes to the ATP binding site. The L-aspartate site is built by Thr-120, Asn-124, and Asp-125. Residue Asn-124 coordinates L-citrulline. L-citrulline is bound by residues Arg-128, Ser-177, Ser-186, Glu-263, and Tyr-275.

This sequence belongs to the argininosuccinate synthase family. Type 1 subfamily. As to quaternary structure, homotetramer.

It is found in the cytoplasm. The enzyme catalyses L-citrulline + L-aspartate + ATP = 2-(N(omega)-L-arginino)succinate + AMP + diphosphate + H(+). It participates in amino-acid biosynthesis; L-arginine biosynthesis; L-arginine from L-ornithine and carbamoyl phosphate: step 2/3. The chain is Argininosuccinate synthase from Clostridium botulinum (strain Eklund 17B / Type B).